The primary structure comprises 274 residues: MPDPTGVAGRLPAVFMTPGTSSFTDFLSVAAPDLLPGARGPLPAPVTDAAHGTTIVAVAFPGGVIMAGDRRATQGHMIAQRDVEKVHHADEFSCVGYAGTAGVGAELIRLFQVELEHYEKIEGSTLSLDAKANRLAFMVKGNLGMAMQGLAVIPLFAGFDTETGEGRIFSYDIAAAKSEERTYESIGSGSVFARGSLKKRYRANHSQDDAIRISVEALYDAADDDSATGGPDLIRKLYPIVASVTVDGYRRLTDDEVGPVVDSIIADRAQNSGG.

The propeptide at 1–52 (MPDPTGVAGRLPAVFMTPGTSSFTDFLSVAAPDLLPGARGPLPAPVTDAAHG) is removed in mature form; by autocatalysis. The active-site Nucleophile is threonine 53.

It belongs to the peptidase T1B family. The 20S proteasome core is composed of 14 alpha and 14 beta subunits that assemble into four stacked heptameric rings, resulting in a barrel-shaped structure. The two inner rings, each composed of seven catalytic beta subunits, are sandwiched by two outer rings, each composed of seven alpha subunits. The catalytic chamber with the active sites is on the inside of the barrel. Has a gated structure, the ends of the cylinder being occluded by the N-termini of the alpha-subunits. Is capped by the proteasome-associated ATPase, ARC.

It localises to the cytoplasm. The catalysed reaction is Cleavage of peptide bonds with very broad specificity.. It participates in protein degradation; proteasomal Pup-dependent pathway. With respect to regulation, the formation of the proteasomal ATPase ARC-20S proteasome complex, likely via the docking of the C-termini of ARC into the intersubunit pockets in the alpha-rings, may trigger opening of the gate for substrate entry. Interconversion between the open-gate and close-gate conformations leads to a dynamic regulation of the 20S proteasome proteolysis activity. Functionally, component of the proteasome core, a large protease complex with broad specificity involved in protein degradation. This is Proteasome subunit beta from Parafrankia sp. (strain EAN1pec).